Here is a 661-residue protein sequence, read N- to C-terminus: Heme transporter BhuA (661 aa).

The N-terminal stretch at Met1 to Ala23 is a signal peptide. The TBDR plug domain occupies Lys48–Val159. Residues Thr170–Phe661 form the TBDR beta-barrel domain.

The protein belongs to the TonB-dependent receptor family.

Its subcellular location is the cell outer membrane. Its function is as follows. Heme transporter. The sequence is that of Heme transporter BhuA (bhuA) from Brucella abortus biovar 1 (strain 9-941).